Reading from the N-terminus, the 274-residue chain is UPF0758 protein RHECIAT_CH0001935 (274 aa).

Residues 1–57 (MAKRPAATSSNDELPFATEEPVADERSFFGGRPQNPTAPNARAALPASLSGPEHYHG) form a disordered region. Residues 152-274 (VLSSWSSVIQ…HVSLKGLKLI (123 aa)) form the MPN domain. Zn(2+)-binding residues include H223, H225, and D236. The JAMM motif signature appears at 223 to 236 (HNHPSGDPTPSRAD).

It belongs to the UPF0758 family.

This is UPF0758 protein RHECIAT_CH0001935 from Rhizobium etli (strain CIAT 652).